The chain runs to 381 residues: Cytochrome b (381 aa).

4 helical membrane passes run Phe-34–Met-54, Trp-78–Ile-99, Trp-114–Leu-134, and Phe-179–Leu-199. Heme b contacts are provided by His-84 and His-98. Heme b is bound by residues His-183 and His-197. His-202 contributes to the a ubiquinone binding site. 4 consecutive transmembrane segments (helical) span residues Tyr-227–Met-247, Leu-289–His-309, Met-321–Gly-341, and Phe-348–Pro-368.

This sequence belongs to the cytochrome b family. The cytochrome bc1 complex contains 3 respiratory subunits (MT-CYB, CYC1 and UQCRFS1), 2 core proteins (UQCRC1 and UQCRC2) and probably 6 low-molecular weight proteins. Heme b serves as cofactor.

It localises to the mitochondrion inner membrane. Functionally, component of the ubiquinol-cytochrome c reductase complex (complex III or cytochrome b-c1 complex) that is part of the mitochondrial respiratory chain. The b-c1 complex mediates electron transfer from ubiquinol to cytochrome c. Contributes to the generation of a proton gradient across the mitochondrial membrane that is then used for ATP synthesis. The protein is Cytochrome b (mt-cyb) of Carcharhinus porosus (Smalltail shark).